Here is a 391-residue protein sequence, read N- to C-terminus: Origin recognition complex subunit 2 (391 aa).

Residues 1–43 are disordered; it reads MEEYTDSGEDKNVYSDDDNDYFTASTQNNRTSKNTDSSPLDPK. Polar residues predominate over residues 22–38; the sequence is FTASTQNNRTSKNTDSS.

Belongs to the ORC2 family. ORC is composed of six subunits.

It is found in the nucleus. Its function is as follows. Component of the origin recognition complex (ORC) that binds origins of replication. DNA-binding is ATP-dependent, however specific DNA sequences that define origins of replication have not been identified so far. ORC is required to assemble the pre-replication complex necessary to initiate DNA replication. The polypeptide is Origin recognition complex subunit 2 (orcB) (Dictyostelium discoideum (Social amoeba)).